Reading from the N-terminus, the 306-residue chain is Aspartate carbamoyltransferase catalytic subunit (306 aa).

Carbamoyl phosphate-binding residues include R55 and T56. Position 84 (K84) interacts with L-aspartate. Carbamoyl phosphate contacts are provided by R105, H133, and Q136. L-aspartate-binding residues include R166 and R227. Carbamoyl phosphate is bound by residues L265 and P266.

It belongs to the aspartate/ornithine carbamoyltransferase superfamily. ATCase family. In terms of assembly, heterododecamer (2C3:3R2) of six catalytic PyrB chains organized as two trimers (C3), and six regulatory PyrI chains organized as three dimers (R2).

It catalyses the reaction carbamoyl phosphate + L-aspartate = N-carbamoyl-L-aspartate + phosphate + H(+). It functions in the pathway pyrimidine metabolism; UMP biosynthesis via de novo pathway; (S)-dihydroorotate from bicarbonate: step 2/3. Its function is as follows. Catalyzes the condensation of carbamoyl phosphate and aspartate to form carbamoyl aspartate and inorganic phosphate, the committed step in the de novo pyrimidine nucleotide biosynthesis pathway. In Neisseria gonorrhoeae (strain NCCP11945), this protein is Aspartate carbamoyltransferase catalytic subunit.